The sequence spans 268 residues: Interleukin-1 alpha (268 aa).

Positions 1 to 112 (MAKVPDLFED…DTEEEIIKPR (112 aa)) are excised as a propeptide. An N6-acetyllysine modification is found at Lys-82. Positions 82-86 (KKRRL) are nuclear localization signal (NLS). Residue Ser-87 is modified to Phosphoserine. Asn-102 and Asn-141 each carry an N-linked (GlcNAc...) asparagine glycan.

Belongs to the IL-1 family. Monomer. Interacts with TMED10; the interaction mediates the translocation from the cytoplasm into the ERGIC (endoplasmic reticulum-Golgi intermediate compartment) and thereby secretion. Interacts with IL1R1. Interacts with S100A13; this interaction is the first step in the export of IL1A, followed by direct translocation of this complex across the plasma membrane. Acetylated within its nuclear localization sequence, which impacts subcellular localization. Post-translationally, proteolytic processed by CAPN1 in a calcium-dependent manner. Cleavage from 31 kDa precursor to 18 kDa biologically active molecules. In terms of processing, phosphorylated. Phosphorylation greatly enhances susceptibility to digestion and promotes the conversion of pre-IL1A alpha to the biologically active IL1A.

Its subcellular location is the nucleus. It localises to the cytoplasm. The protein resides in the secreted. In terms of biological role, cytokine constitutively present intracellularly in nearly all resting non-hematopoietic cells that plays an important role in inflammation and bridges the innate and adaptive immune systems. After binding to its receptor IL1R1 together with its accessory protein IL1RAP, forms the high affinity interleukin-1 receptor complex. Signaling involves the recruitment of adapter molecules such as MYD88, IRAK1 or IRAK4. In turn, mediates the activation of NF-kappa-B and the three MAPK pathways p38, p42/p44 and JNK pathways. Within the cell, acts as an alarmin and cell death results in its liberation in the extracellular space after disruption of the cell membrane to induce inflammation and alert the host to injury or damage. In addition to its role as a danger signal, which occurs when the cytokine is passively released by cell necrosis, directly senses DNA damage and acts as signal for genotoxic stress without loss of cell integrity. This chain is Interleukin-1 alpha (IL1A), found in Capra hircus (Goat).